We begin with the raw amino-acid sequence, 1059 residues long: Carbamoyl phosphate synthase large chain (1059 aa).

The carboxyphosphate synthetic domain stretch occupies residues 1–401 (MPKRTDIKKI…SLLKACRSLE (401 aa)). The ATP site is built by arginine 129, arginine 169, glycine 175, glycine 176, arginine 208, isoleucine 210, glutamate 215, glycine 241, isoleucine 242, histidine 243, glutamine 284, and glutamate 298. An ATP-grasp 1 domain is found at 133–327 (KQLMEDLEQP…IAKLAAKIAV (195 aa)). Mg(2+) is bound by residues glutamine 284, glutamate 298, and asparagine 300. 3 residues coordinate Mn(2+): glutamine 284, glutamate 298, and asparagine 300. The segment at 402–546 (IGVYHNEMPE…YSTYEWENES (145 aa)) is oligomerization domain. The tract at residues 547–929 (IKSEKESVIV…ALYKAFEASY (383 aa)) is carbamoyl phosphate synthetic domain. Residues 671–861 (EQALKDLNIP…MAQIATKLIL (191 aa)) enclose the ATP-grasp 2 domain. ATP contacts are provided by arginine 707, serine 746, leucine 748, glutamate 752, glycine 777, valine 778, histidine 779, serine 780, glutamine 820, and glutamate 832. Residues glutamine 820, glutamate 832, and asparagine 834 each contribute to the Mg(2+) site. Residues glutamine 820, glutamate 832, and asparagine 834 each coordinate Mn(2+). The MGS-like domain occupies 930–1059 (FHLPAFGNVI…ESRGFITQAI (130 aa)). The interval 930-1059 (FHLPAFGNVI…ESRGFITQAI (130 aa)) is allosteric domain.

Belongs to the CarB family. In terms of assembly, composed of two chains; the small (or glutamine) chain promotes the hydrolysis of glutamine to ammonia, which is used by the large (or ammonia) chain to synthesize carbamoyl phosphate. Tetramer of heterodimers (alpha,beta)4. It depends on Mg(2+) as a cofactor. Requires Mn(2+) as cofactor.

The catalysed reaction is hydrogencarbonate + L-glutamine + 2 ATP + H2O = carbamoyl phosphate + L-glutamate + 2 ADP + phosphate + 2 H(+). It catalyses the reaction hydrogencarbonate + NH4(+) + 2 ATP = carbamoyl phosphate + 2 ADP + phosphate + 2 H(+). Its pathway is amino-acid biosynthesis; L-arginine biosynthesis; carbamoyl phosphate from bicarbonate: step 1/1. It participates in pyrimidine metabolism; UMP biosynthesis via de novo pathway; (S)-dihydroorotate from bicarbonate: step 1/3. In terms of biological role, large subunit of the glutamine-dependent carbamoyl phosphate synthetase (CPSase). CPSase catalyzes the formation of carbamoyl phosphate from the ammonia moiety of glutamine, carbonate, and phosphate donated by ATP, constituting the first step of 2 biosynthetic pathways, one leading to arginine and/or urea and the other to pyrimidine nucleotides. The large subunit (synthetase) binds the substrates ammonia (free or transferred from glutamine from the small subunit), hydrogencarbonate and ATP and carries out an ATP-coupled ligase reaction, activating hydrogencarbonate by forming carboxy phosphate which reacts with ammonia to form carbamoyl phosphate. The sequence is that of Carbamoyl phosphate synthase large chain from Streptococcus mutans serotype c (strain ATCC 700610 / UA159).